Reading from the N-terminus, the 543-residue chain is Zinc finger CCCH-type with G patch domain-containing protein (543 aa).

2 disordered regions span residues 55 to 79 (AATS…DNPI) and 95 to 132 (TEDS…DKLD). The segment covering 65-76 (DTAGRAPPATAD) has biased composition (low complexity). The segment covering 118 to 131 (DDDADNDDDADDKL) has biased composition (acidic residues). A C3H1-type zinc finger spans residues 186–209 (PCAYFLEGECRFTDEKCRYSHGEV). The disordered stretch occupies residues 272-304 (PFEDLLPLDEDEDGQEAAEDSESDTDGADEEEA). The span at 277–304 (LPLDEDEDGQEAAEDSESDTDGADEEEA) shows a compositional bias: acidic residues. Residues 335 to 381 (TRGIGSKIMQKMGYIVGTGLGREGEGIVVPVSAQVLPQGRSLDYCME) enclose the G-patch domain. A disordered region spans residues 438 to 460 (GAAGGESSRPNRNRPGALSRQEL).

Its subcellular location is the nucleus. Functionally, transcription repressor. This is Zinc finger CCCH-type with G patch domain-containing protein from Anopheles gambiae (African malaria mosquito).